The primary structure comprises 101 residues: Secreted RxLR effector protein 64 (101 aa).

The first 23 residues, 1–23, serve as a signal peptide directing secretion; that stretch reads MMSPPMTTTLMFILNYAIISFHG. Residues 48-51 carry the RxLR motif; that stretch reads RELR. Residues 67–87 form a helical membrane-spanning segment; sequence LQPILPLPLCLPFPLVPASIF.

The protein belongs to the RxLR effector family.

Its subcellular location is the secreted. The protein localises to the host cytoplasm. The protein resides in the host nucleus. It localises to the membrane. Its function is as follows. Effector that acts as a broad suppressor of cell death to interrupt plant immunity. Inhibits cell death induced by cell death-inducing proteins, including the PAMP elicitor INF1 from P.infestans. The polypeptide is Secreted RxLR effector protein 64 (Plasmopara viticola (Downy mildew of grapevine)).